Consider the following 166-residue polypeptide: Large ribosomal subunit protein uL10 (166 aa).

This sequence belongs to the universal ribosomal protein uL10 family. As to quaternary structure, part of the ribosomal stalk of the 50S ribosomal subunit. The N-terminus interacts with L11 and the large rRNA to form the base of the stalk. The C-terminus forms an elongated spine to which L12 dimers bind in a sequential fashion forming a multimeric L10(L12)X complex.

Its function is as follows. Forms part of the ribosomal stalk, playing a central role in the interaction of the ribosome with GTP-bound translation factors. The protein is Large ribosomal subunit protein uL10 of Marinomonas sp. (strain MWYL1).